The following is a 231-amino-acid chain: Large ribosomal subunit protein uL1 (231 aa).

It belongs to the universal ribosomal protein uL1 family. Part of the 50S ribosomal subunit.

Functionally, binds directly to 23S rRNA. The L1 stalk is quite mobile in the ribosome, and is involved in E site tRNA release. Its function is as follows. Protein L1 is also a translational repressor protein, it controls the translation of the L11 operon by binding to its mRNA. This chain is Large ribosomal subunit protein uL1, found in Thioalkalivibrio sulfidiphilus (strain HL-EbGR7).